The chain runs to 685 residues: Phenoloxidase subunit 1 (685 aa).

Positions 1 to 51 are excised as a propeptide; that stretch reads MSDAKNNLLLFFDRPSEPCFMQKGEENAVFEIPDNYYPEKYQRVSNAIGNR. Asn-184 carries N-linked (GlcNAc...) asparagine glycosylation. Residues His-209, His-213, and His-239 each contribute to the Cu cation site. N-linked (GlcNAc...) asparagine glycosylation is found at Asn-254 and Asn-324. Glu-351 serves as the catalytic Proton acceptor. Cu cation is bound by residues His-366, His-370, and His-406. Residues Asn-491 and Asn-540 are each glycosylated (N-linked (GlcNAc...) asparagine). Cystine bridges form between Cys-581–Cys-623 and Cys-583–Cys-630.

Heterodimer. Cu(2+) serves as cofactor. The N-terminus is blocked. Synthesized by hemocytes and released into the hemolymph plasma.

The protein localises to the secreted. It catalyses the reaction 2 L-dopa + O2 = 2 L-dopaquinone + 2 H2O. The enzyme catalyses L-tyrosine + O2 = L-dopaquinone + H2O. Its function is as follows. This is a copper-containing oxidase that functions in the formation of pigments such as melanins and other polyphenolic compounds. Catalyzes the rate-limiting conversions of tyrosine to DOPA, DOPA to DOPA-quinone and possibly 5,6 dihydroxyindole to indole-5'6 quinone. The protein is Phenoloxidase subunit 1 of Bombyx mori (Silk moth).